Reading from the N-terminus, the 360-residue chain is Phospho-N-acetylmuramoyl-pentapeptide-transferase (360 aa).

10 consecutive transmembrane segments (helical) span residues 21-41 (YLTF…LWIG), 71-91 (TPTM…ILWA), 94-114 (SNPY…IGFI), 142-162 (LVVA…VLVV), 168-188 (IMPQ…VGAS), 199-219 (GLAI…AWAT), 236-256 (ASEL…FLWF), 263-283 (VFMG…IAVL), 288-308 (FLLF…ILQV), and 338-358 (VIVR…VTLK).

The protein belongs to the glycosyltransferase 4 family. MraY subfamily. Mg(2+) serves as cofactor.

The protein localises to the cell inner membrane. The enzyme catalyses UDP-N-acetyl-alpha-D-muramoyl-L-alanyl-gamma-D-glutamyl-meso-2,6-diaminopimeloyl-D-alanyl-D-alanine + di-trans,octa-cis-undecaprenyl phosphate = di-trans,octa-cis-undecaprenyl diphospho-N-acetyl-alpha-D-muramoyl-L-alanyl-D-glutamyl-meso-2,6-diaminopimeloyl-D-alanyl-D-alanine + UMP. It participates in cell wall biogenesis; peptidoglycan biosynthesis. Its function is as follows. Catalyzes the initial step of the lipid cycle reactions in the biosynthesis of the cell wall peptidoglycan: transfers peptidoglycan precursor phospho-MurNAc-pentapeptide from UDP-MurNAc-pentapeptide onto the lipid carrier undecaprenyl phosphate, yielding undecaprenyl-pyrophosphoryl-MurNAc-pentapeptide, known as lipid I. In Tolumonas auensis (strain DSM 9187 / NBRC 110442 / TA 4), this protein is Phospho-N-acetylmuramoyl-pentapeptide-transferase.